We begin with the raw amino-acid sequence, 194 residues long: MSNTWLVVGLGNPGPDYSHTRHNIGFMVAEELASRIGASFKSNKSRALVAEGRLGMGGPKLVLAKPQTFMNLSGGPTSALAKFYDLGADNVIAVQDEIDIPFNTIKLKIGGGEGGHNGLRDISKALGAKEYLRVRVGVGRPPGGQGDAAGHVLKVFSTAEKKELPFLIQDAADAVELLISDGLLAAQQKFHPAK.

Tyrosine 17 lines the tRNA pocket. Histidine 22 (proton acceptor) is an active-site residue. TRNA-binding residues include phenylalanine 69, asparagine 71, and asparagine 117.

It belongs to the PTH family. Monomer.

Its subcellular location is the cytoplasm. The enzyme catalyses an N-acyl-L-alpha-aminoacyl-tRNA + H2O = an N-acyl-L-amino acid + a tRNA + H(+). Hydrolyzes ribosome-free peptidyl-tRNAs (with 1 or more amino acids incorporated), which drop off the ribosome during protein synthesis, or as a result of ribosome stalling. Functionally, catalyzes the release of premature peptidyl moieties from peptidyl-tRNA molecules trapped in stalled 50S ribosomal subunits, and thus maintains levels of free tRNAs and 50S ribosomes. This is Peptidyl-tRNA hydrolase from Renibacterium salmoninarum (strain ATCC 33209 / DSM 20767 / JCM 11484 / NBRC 15589 / NCIMB 2235).